We begin with the raw amino-acid sequence, 374 residues long: Translocating chain-associated membrane protein 1 (374 aa).

The Cytoplasmic portion of the chain corresponds to 1–29 (MAIRKKSNKNPPLLSHEFLLQNHADIVSC). Residues 30–50 (LAMLFLLGLMFEVTAKGAIIF) form a helical membrane-spanning segment. The Lumenal portion of the chain corresponds to 51-76 (VALQYNVTRPATEEQATESASLYHYG). The N-linked (GlcNAc...) asparagine glycan is linked to Asn56. Residues 77–97 (IKDLATVLFYMLVAIIIHAII) form a helical membrane-spanning segment. Over 98 to 121 (QEYVLDKINRRMHFSKTKHSKFNE) the chain is Cytoplasmic. A TLC domain is found at 117 to 326 (SKFNESGQLS…NFQLRRWREH (210 aa)). Residues 122–142 (SGQLSAFYLFACVWGTFILIS) traverse the membrane as a helical segment. The Lumenal portion of the chain corresponds to 143-159 (ENYISDPTILWRAYPHN). The chain crosses the membrane as a helical span at residues 160 to 180 (LMTFQTKFFYISQLAYWLHAF). Residues 181 to 192 (PELYFQKTKKED) lie on the Cytoplasmic side of the membrane. The helical transmembrane segment at 193 to 213 (IPRQLVYIGLYLFHIAGAYLL) threads the bilayer. At 214–217 (NLNH) the chain is on the lumenal side. The chain crosses the membrane as a helical span at residues 218-238 (LGLVLLVLHYFVEFLFHISRL). Residues 239–251 (FYFSDEKYQKGFS) lie on the Cytoplasmic side of the membrane. A helical transmembrane segment spans residues 252 to 272 (LWAVLFVLGRLLTLILSVLTV). At 273-297 (GFGLARAENQKLDFSTGNFNVLAVR) the chain is on the lumenal side. Residues 298-318 (IAVLASICITQAFMMWKFINF) form a helical membrane-spanning segment. The Cytoplasmic portion of the chain corresponds to 319 to 374 (QLRRWREHSAFQAPPVKRKPAVTKGRSSRKGTENGVNGTVTSNGADSPRNRKEKSS). Residues 333–374 (PVKRKPAVTKGRSSRKGTENGVNGTVTSNGADSPRNRKEKSS) are disordered. Positions 334-347 (VKRKPAVTKGRSSR) are enriched in basic residues. Positions 352-363 (NGVNGTVTSNGA) are enriched in polar residues. Ser365 bears the Phosphoserine mark.

This sequence belongs to the TRAM family. Interacts with SEC61B. May interact with Derlin-1/DERL1. In terms of processing, N-glycosylated.

It localises to the endoplasmic reticulum membrane. In terms of biological role, involved in the translocation of nascent protein chains into or through the endoplasmic reticulum (ER) membrane by facilitating the proper chain positioning at the SEC61 channel. Regulates the exposure of nascent secretory protein chain to the cytosol during translocation into the ER. May affect the phospholipid bilayer in the vicinity of the lateral gate of the SEC61 channel, thereby facilitating ER protein transport. Intimately associates with transmembrane (TM) domain of nascent membrane proteins during the entire integration process into the ER membrane. Associates with the second TM domain of G-protein-coupled receptor opsin/OPSD nascent chain in the ER membrane, which may facilitate its integration into the membrane. Under conditions of ER stress, participates in the disposal of misfolded ER membrane proteins during the unfolded protein response (UPR), an integrated stress response (ISR) pathway, by selectively retrotranslocating misfolded ER-membrane proteins from the ER into the cytosol where they are ubiquitinated and degraded by the proteasome. The polypeptide is Translocating chain-associated membrane protein 1 (Mus musculus (Mouse)).